The chain runs to 225 residues: Cytidylate kinase (225 aa).

10 to 18 (GPASSGKST) serves as a coordination point for ATP.

Belongs to the cytidylate kinase family. Type 1 subfamily.

It is found in the cytoplasm. It catalyses the reaction CMP + ATP = CDP + ADP. The enzyme catalyses dCMP + ATP = dCDP + ADP. The sequence is that of Cytidylate kinase from Streptococcus sanguinis (strain SK36).